The primary structure comprises 29 residues: Varv peptide A (29 aa).

The segment at residues 1–29 (GLPVCGETCVGGTCNTPGCSCSWPVCTRN) is a cross-link (cyclopeptide (Gly-Asn)). 3 cysteine pairs are disulfide-bonded: cysteine 5–cysteine 19, cysteine 9–cysteine 21, and cysteine 14–cysteine 26.

In terms of processing, this is a cyclic peptide.

In terms of biological role, probably participates in a plant defense mechanism. Has cytotoxic activity against a variety of drug-resistant and drug-sensitive human tumor cell lines, and against primary chronic lymphocytic leukemia cells. Has weak cytotoxic activity against primary ovarian carcinoma cells or normal lymphocytes. This Viola arvensis (European field pansy) protein is Varv peptide A.